The chain runs to 95 residues: Acylphosphatase (95 aa).

Residues 7–95 (CTMAWVYGSV…RSWDKFAILY (89 aa)) enclose the Acylphosphatase-like domain. Active-site residues include Arg22 and Asn40.

It belongs to the acylphosphatase family.

It carries out the reaction an acyl phosphate + H2O = a carboxylate + phosphate + H(+). This chain is Acylphosphatase (acyP), found in Klebsiella pneumoniae subsp. pneumoniae (strain ATCC 700721 / MGH 78578).